The following is a 419-amino-acid chain: Aminoacyltransferase FemB (419 aa).

The protein belongs to the FemABX family. Homodimer. Interacts with FemA.

The protein resides in the cytoplasm. The enzyme catalyses MurNAc-L-Ala-D-isoglutaminyl-L-Lys-(N(6)-tri-Gly)-D-Ala-D-Ala-diphospho-di-trans,octa-cis-undecaprenyl-GlcNAc + 2 glycyl-tRNA(Gly) = MurNAc-L-Ala-D-isoglutaminyl-L-Lys-(N(6)-penta-Gly)-D-Ala-D-Ala-diphospho-di-trans,octa-cis-undecaprenyl-GlcNAc + 2 tRNA(Gly) + 2 H(+). Catalyzes the formation of the pentaglycine interpeptide bridge, which is characteristic of the S.aureus peptidoglycan. Adds glycines 4 and 5 of the pentaglycine bridge, using glycyl-tRNA(Gly) as donor. Involved in resistance to methicillin. This Staphylococcus aureus (strain MW2) protein is Aminoacyltransferase FemB (femB).